Here is a 587-residue protein sequence, read N- to C-terminus: Putative ankyrin repeat protein L66 (587 aa).

16 ANK repeats span residues 77–106 (DKNLSMLLATKYGKLNIIKYLVRNGTDIRI), 108–136 (NNYPVRKASKYGYLDIVKYLIREDCDVSD), 137–166 (YDNYALRKATKNGYFEIVKLLVDQGADVHC), 168–196 (DNAPIKLACKYGYSKMVKFFHKKFLDVNY), 199–228 (NEDLLLKLASSGGHYKIVKYLVTKSNNIHF), 230–256 (DSLISVIKKGHLDILKYFISKGVILGN), 259–288 (NIRNATLMACKKGHYNVVEYLIDNIISIEN), 302–331 (FKKNLITNTCISGNLDMLKYLISKGINVAF), 333–360 (DNLPIKISACHDHLHLVKYLVSISNVKI), 361–390 (NYENILISASENGCIKVVKYLVDKGVNVKD), 392–418 (TAIYSAGINGYLQIVKFLESNGADLIK), 420–448 (HNEIFLECSSNGYLNVIKYIVSKYNINKS), 449–478 (IYDKALIIASKNNQLKTVKYLVHMGADIKS), 480–507 (KFHDMEKIIDNDLELLKYLVSKGLKINN), 509–537 (YKNLISKIIMNNDLDKLKYLISLGVNMKC), and 539–567 (RIDTFNSCIQNRNKEMLSYLISRKIKLIC).

The polypeptide is Putative ankyrin repeat protein L66 (Acanthamoeba polyphaga mimivirus (APMV)).